Here is a 452-residue protein sequence, read N- to C-terminus: Ketoisovalerate reductase BEA2 (452 aa).

70–75 (GPGNIG) is a binding site for NADP(+). Lysine 285 serves as the catalytic Proton donor. Substrate contacts are provided by asparagine 289, asparagine 293, and serine 393. Glutamate 405 is an NADP(+) binding site.

This sequence belongs to the ketopantoate reductase family.

The enzyme catalyses (R)-2-hydroxy-3-methylbutanoate + NADP(+) = 3-methyl-2-oxobutanoate + NADPH + H(+). Ketoisovalerate reductase; part of the gene cluster that mediates the biosynthesis of beauvericin (BEA), a non-ribosomal cyclic hexadepsipeptide that shows antibiotic, antifungal, insecticidal, and cancer cell antiproliferative and antihaptotactic activity. Ketoisovalerate reductase BEA2 catalyzes the NADPH-specific reduction of ketoisovaleric acid to hydroxyisovalerate, a precursor for beauvericin biosynthesis. The nonribosomal cyclodepsipeptide synthetase BEA1 then catalyzes the formation of beauvericin via condensation and cyclization of 3 dipeptidol monomers, each composed of one unit of hydroxyisovalerate and one unit of N-methyl-phenylalanine. This Gibberella fujikuroi (strain CBS 195.34 / IMI 58289 / NRRL A-6831) (Bakanae and foot rot disease fungus) protein is Ketoisovalerate reductase BEA2.